A 324-amino-acid chain; its full sequence is Lactonase drp35 (324 aa).

The Ca(2+) site is built by glutamate 47, serine 109, glycine 111, aspartate 129, threonine 132, tyrosine 134, aspartate 137, asparagine 184, aspartate 235, and serine 236. Aspartate 235 serves as the catalytic Proton donor.

It belongs to the SMP-30/CGR1 family. The cofactor is Ca(2+).

It is found in the cytoplasm. In terms of biological role, exhibits lactonase activity. Acts in cells with perturbed membrane integrity and is possibly related to the membrane homeostasis. The chain is Lactonase drp35 (drp35) from Staphylococcus aureus (strain MW2).